The following is a 347-amino-acid chain: DNA-directed RNA polymerase subunit alpha (347 aa).

Residues 1–230 form an alpha N-terminal domain (alpha-NTD) region; it reads MFKGFQKPKR…DHMTIFINFE (230 aa). The alpha C-terminal domain (alpha-CTD) stretch occupies residues 247 to 347; that stretch reads MNEVLNRSVE…EDDGQDQIGE (101 aa). The disordered stretch occupies residues 320–347; the sequence is GRLVAPPPSAGGGPDFGPEDDGQDQIGE. Residues 336-347 are compositionally biased toward acidic residues; that stretch reads GPEDDGQDQIGE.

It belongs to the RNA polymerase alpha chain family. As to quaternary structure, homodimer. The RNAP catalytic core consists of 2 alpha, 1 beta, 1 beta' and 1 omega subunit. When a sigma factor is associated with the core the holoenzyme is formed, which can initiate transcription.

It catalyses the reaction RNA(n) + a ribonucleoside 5'-triphosphate = RNA(n+1) + diphosphate. Functionally, DNA-dependent RNA polymerase catalyzes the transcription of DNA into RNA using the four ribonucleoside triphosphates as substrates. This chain is DNA-directed RNA polymerase subunit alpha, found in Solibacter usitatus (strain Ellin6076).